We begin with the raw amino-acid sequence, 138 residues long: Ribulose bisphosphate carboxylase small subunit (138 aa).

This sequence belongs to the RuBisCO small chain family. Heterohexadecamer of 8 large and 8 small subunits.

Its subcellular location is the plastid. It is found in the chloroplast. Its function is as follows. RuBisCO catalyzes two reactions: the carboxylation of D-ribulose 1,5-bisphosphate, the primary event in carbon dioxide fixation, as well as the oxidative fragmentation of the pentose substrate in the photorespiration process. Both reactions occur simultaneously and in competition at the same active site. Although the small subunit is not catalytic it is essential for maximal activity. Carbon dioxide and oxygen bind in the same pocket of the enzyme in a similar manner. The polypeptide is Ribulose bisphosphate carboxylase small subunit (Galdieria sulphuraria (Red alga)).